Consider the following 88-residue polypeptide: Small ribosomal subunit protein uS15 (88 aa).

Residues 1-20 (MLATEKKQELIDQYKRHEGD) show a composition bias toward basic and acidic residues. Positions 1-21 (MLATEKKQELIDQYKRHEGDT) are disordered.

Belongs to the universal ribosomal protein uS15 family. Part of the 30S ribosomal subunit. Forms a bridge to the 50S subunit in the 70S ribosome, contacting the 23S rRNA.

Functionally, one of the primary rRNA binding proteins, it binds directly to 16S rRNA where it helps nucleate assembly of the platform of the 30S subunit by binding and bridging several RNA helices of the 16S rRNA. Its function is as follows. Forms an intersubunit bridge (bridge B4) with the 23S rRNA of the 50S subunit in the ribosome. This Syntrophotalea carbinolica (strain DSM 2380 / NBRC 103641 / GraBd1) (Pelobacter carbinolicus) protein is Small ribosomal subunit protein uS15.